A 101-amino-acid polypeptide reads, in one-letter code: uncharacterized protein (101 aa).

The signal sequence occupies residues 1–17 (MKKAAVLAVVLSLGLAG). The N-palmitoyl cysteine moiety is linked to residue cysteine 18. Cysteine 18 is lipidated: S-diacylglycerol cysteine.

The protein localises to the cell membrane. This is an uncharacterized protein from Pasteurella multocida (strain Pm70).